A 165-amino-acid polypeptide reads, in one-letter code: Lipoprotein signal peptidase (165 aa).

The next 3 membrane-spanning stretches (helical) occupy residues Leu9–Tyr29, Lys69–Leu89, and Phe100–Asn120. Active-site residues include Asp124 and Asp142. A helical transmembrane segment spans residues Trp133–Val153.

It belongs to the peptidase A8 family.

The protein localises to the cell inner membrane. It catalyses the reaction Release of signal peptides from bacterial membrane prolipoproteins. Hydrolyzes -Xaa-Yaa-Zaa-|-(S,diacylglyceryl)Cys-, in which Xaa is hydrophobic (preferably Leu), and Yaa (Ala or Ser) and Zaa (Gly or Ala) have small, neutral side chains.. It functions in the pathway protein modification; lipoprotein biosynthesis (signal peptide cleavage). Functionally, this protein specifically catalyzes the removal of signal peptides from prolipoproteins. The sequence is that of Lipoprotein signal peptidase from Chlamydia felis (strain Fe/C-56) (Chlamydophila felis).